Here is a 46-residue protein sequence, read N- to C-terminus: Putative antitoxin VapB3 (46 aa).

Belongs to the UPF0165 family.

In terms of biological role, possibly the antitoxin component of a type II toxin-antitoxin (TA) system. Its cognate toxin is VapC3 (Potential). This chain is Putative antitoxin VapB3 (vapB3), found in Pyrococcus furiosus (strain ATCC 43587 / DSM 3638 / JCM 8422 / Vc1).